A 224-amino-acid chain; its full sequence is Germin-like protein 1-2 (224 aa).

Residues 1–29 (MASSRSVVLRVLVAVAVVAAAGAPRLAVA) form the signal peptide. A disulfide bridge links cysteine 38 with cysteine 53. A Cupin type-1 domain is found at 67–215 (DAIVQAPSTS…TFLMGEDEVG (149 aa)). The N-linked (GlcNAc...) asparagine glycan is linked to asparagine 82. Positions 115, 117, 122, and 161 each coordinate Mn(2+). Residue asparagine 170 is glycosylated (N-linked (GlcNAc...) asparagine).

It belongs to the germin family. As to quaternary structure, oligomer (believed to be a pentamer but probably hexamer).

It localises to the secreted. The protein localises to the extracellular space. Its subcellular location is the apoplast. Functionally, may play a role in plant defense. Probably has no oxalate oxidase activity even if the active site is conserved. This chain is Germin-like protein 1-2, found in Oryza sativa subsp. japonica (Rice).